The primary structure comprises 223 residues: Urease subunit alpha (223 aa).

The urease gamma stretch occupies residues 1–101 (MHFTQQQLQR…LVTIHEPIAN (101 aa)). Positions 102–223 (DDKIKAGEIF…LSKAKEKGFL (122 aa)) are urease beta.

The protein in the N-terminal section; belongs to the urease gamma subunit family. In the C-terminal section; belongs to the urease beta subunit family. Heterohexamer of 3 UreA (alpha) and 3 UreB (beta) subunits.

Its subcellular location is the cytoplasm. It carries out the reaction urea + 2 H2O + H(+) = hydrogencarbonate + 2 NH4(+). It functions in the pathway nitrogen metabolism; urea degradation; CO(2) and NH(3) from urea (urease route): step 1/1. The chain is Urease subunit alpha from Campylobacter lari.